The sequence spans 428 residues: MADLDLQRKMVSPKLHVTIPEPCKLSSVSSPISSSSSAACSAYELYLRLPELRNLWSSLYFPHWISEPVLKPALQALEITFRLILTVASDTRPYINRREWIRRLDSLTTSQIKIVAAICGDEDNYEENVSAAPVSNGWSSLSLLSEIATCRTSESVGQKILSTIENEMRWCKYTLGLGEPNLAGKPYLQYDAVCLPEELHSLKNNPYADHIENQENQMLYTSHQILESWIYVSVNLLYRIESRIEEGKFEKASSDVYLLERIWKLLSEIEDLHILMDPEDFLKVKKQLQIKSTFPNDAFCFRSKGLVEMAKMSKELRQKVPAVLEVEVDPTGGPRLQEAAMKLYSRKTEYEKIHLLQGMQAVESAAKRFFFGYQKLVAAMIGNAEANANRTVANHESYDSLTQVFMEPPYYPSLDAAKTFLGEFWSQL.

In terms of assembly, interacts with SNF4.

Its subcellular location is the cytoplasm. Its function is as follows. Positive regulator of basal resistance. The sequence is that of Nematode resistance protein-like HSPRO1 (HSPRO1) from Arabidopsis thaliana (Mouse-ear cress).